The primary structure comprises 337 residues: DNA-directed RNA polymerase subunit alpha (337 aa).

The segment at 1 to 233 (MIQKNWQELI…DQLSIFVNFE (233 aa)) is alpha N-terminal domain (alpha-NTD). Positions 249–337 (FNPVLLKKVD…DLAKRYEDQY (89 aa)) are alpha C-terminal domain (alpha-CTD).

This sequence belongs to the RNA polymerase alpha chain family. As to quaternary structure, homodimer. The RNAP catalytic core consists of 2 alpha, 1 beta, 1 beta' and 1 omega subunit. When a sigma factor is associated with the core the holoenzyme is formed, which can initiate transcription.

The enzyme catalyses RNA(n) + a ribonucleoside 5'-triphosphate = RNA(n+1) + diphosphate. In terms of biological role, DNA-dependent RNA polymerase catalyzes the transcription of DNA into RNA using the four ribonucleoside triphosphates as substrates. In Brucella canis (strain ATCC 23365 / NCTC 10854 / RM-666), this protein is DNA-directed RNA polymerase subunit alpha.